Here is a 325-residue protein sequence, read N- to C-terminus: Phosphatidylserine decarboxylase proenzyme (325 aa).

Active-site charge relay system; for autoendoproteolytic cleavage activity residues include Asp-90, His-147, and Ser-253. Ser-253 acts as the Schiff-base intermediate with substrate; via pyruvic acid; for decarboxylase activity in catalysis. Position 253 is a pyruvic acid (Ser); by autocatalysis (Ser-253). The segment at Met-281–Ser-325 is disordered. The span at Lys-284 to Asn-305 shows a compositional bias: polar residues.

This sequence belongs to the phosphatidylserine decarboxylase family. PSD-B subfamily. Prokaryotic type I sub-subfamily. In terms of assembly, heterodimer of a large membrane-associated beta subunit and a small pyruvoyl-containing alpha subunit. The cofactor is pyruvate. Post-translationally, is synthesized initially as an inactive proenzyme. Formation of the active enzyme involves a self-maturation process in which the active site pyruvoyl group is generated from an internal serine residue via an autocatalytic post-translational modification. Two non-identical subunits are generated from the proenzyme in this reaction, and the pyruvate is formed at the N-terminus of the alpha chain, which is derived from the carboxyl end of the proenzyme. The autoendoproteolytic cleavage occurs by a canonical serine protease mechanism, in which the side chain hydroxyl group of the serine supplies its oxygen atom to form the C-terminus of the beta chain, while the remainder of the serine residue undergoes an oxidative deamination to produce ammonia and the pyruvoyl prosthetic group on the alpha chain. During this reaction, the Ser that is part of the protease active site of the proenzyme becomes the pyruvoyl prosthetic group, which constitutes an essential element of the active site of the mature decarboxylase.

The protein resides in the cell membrane. The enzyme catalyses a 1,2-diacyl-sn-glycero-3-phospho-L-serine + H(+) = a 1,2-diacyl-sn-glycero-3-phosphoethanolamine + CO2. It functions in the pathway phospholipid metabolism; phosphatidylethanolamine biosynthesis; phosphatidylethanolamine from CDP-diacylglycerol: step 2/2. Its function is as follows. Catalyzes the formation of phosphatidylethanolamine (PtdEtn) from phosphatidylserine (PtdSer). This chain is Phosphatidylserine decarboxylase proenzyme, found in Alteromonas mediterranea (strain DSM 17117 / CIP 110805 / LMG 28347 / Deep ecotype).